A 123-amino-acid polypeptide reads, in one-letter code: Histone H1-like protein HC1 (123 aa).

The interval 54–123 is disordered; the sequence is IKAEKSGLLK…KPSKARGFRK (70 aa). Basic residues predominate over residues 61 to 75; the sequence is LLKRKPSTKAPAKVK. Residues 85–102 show a composition bias toward low complexity; sequence KSSAAAAKTSKAVKASKP. Residues 103-123 are compositionally biased toward basic residues; the sequence is ASKKTAAKKVKKPSKARGFRK.

Belongs to the histone H1/H5 family. HCT subfamily.

Its function is as follows. Might have a role analogous to that of eukaryotic histone proteins. This Chlamydia pneumoniae (Chlamydophila pneumoniae) protein is Histone H1-like protein HC1 (hctA).